Consider the following 140-residue polypeptide: Smith-Magenis syndrome chromosomal region candidate gene 5 protein (140 aa).

Residues 43 to 77 (CTGPSSQAPPQPPQASPPAAADHSRTPSLLASSHS) are disordered. Positions 49–58 (QAPPQPPQAS) are enriched in pro residues.

As to expression, widely expressed.

The protein is Smith-Magenis syndrome chromosomal region candidate gene 5 protein (SMCR5) of Homo sapiens (Human).